The sequence spans 302 residues: MFFRNLTLFRFPTSLDFSQIDSILPNARLRPVGPLEMTSRGFISPFGREEQEVLNQRQGDFLWLTVGSEDKILPASVVNDLLTRKCSEIEEKKGHPPGGRERKRIKDDLIHELLPRAFVKNSRIDAMLDLRYGYVAVDTASRKAAETVISEIRDLLGSFPALPLNAEISIRSMLTSWIAGEPLPEHLNLGDECEMKDATEGGAIIKCQHQALRCEEIDKHLEVGKQVSKLALILDDHVSFVLGDDLVIRKLKFLDGMLDQLEHSDTDGIRAELDARFALMSAEIRRLFLLLEVPLKLSKANN.

The protein belongs to the RdgC family.

It localises to the cytoplasm. Its subcellular location is the nucleoid. Its function is as follows. May be involved in recombination. The sequence is that of Recombination-associated protein RdgC from Xylella fastidiosa (strain M23).